A 143-amino-acid polypeptide reads, in one-letter code: Spanin, inner membrane subunit (143 aa).

Residues 1–7 are Cytoplasmic-facing; it reads MLEFLRK. A helical; Signal-anchor for type II membrane protein membrane pass occupies residues 8–24; that stretch reads LIPWVLAGMLFGLGWHL. Topologically, residues 25-143 are periplasmic; sequence GSDSMDAKWK…QDTIRELQRK (119 aa).

The protein belongs to the T7likevirus i-spanin family. Interacts (via C-terminus) with the spanin outer lipoprotein subunit (o-spanin) (via C-terminus). Part of the spanin complex which spans the entire periplasmic space. The spanin complex is composed of spanin inner membrane subunit and spanin outer membrane subunit.

It localises to the host cell inner membrane. In terms of biological role, component of the spanin complex that disrupts the host outer membrane and participates in cell lysis during virus exit. The spanin complex conducts the final step in host lysis by disrupting the outer membrane after holin and endolysin action have permeabilized the inner membrane and degraded the host peptidoglycans. Host outer membrane disruption is possibly due to local fusion between the inner and outer membrane performed by the spanin complex. The sequence is that of Spanin, inner membrane subunit from Escherichia coli (Bacteriophage T7).